Reading from the N-terminus, the 157-residue chain is SUMO-conjugating enzyme UBC9-B (157 aa).

Residues isoleucine 4–proline 157 enclose the UBC core domain. The tract at residues arginine 13–lysine 18 is interaction with SUMO1. Cysteine 93 acts as the Glycyl thioester intermediate in catalysis.

Belongs to the ubiquitin-conjugating enzyme family. As to quaternary structure, forms a tight complex with rangap1 and ranbp2. Interacts with vsx1.

It is found in the nucleus. The protein operates within protein modification; protein sumoylation. Accepts the ubiquitin-like proteins sumo1, sumo2 and sumo3 from the uble1a-uble1b E1 complex and catalyzes their covalent attachment to other proteins with the help of an E3 ligase such as ranbp2 or cbx4. Essential for nuclear architecture and chromosome segregation. Mediates nuclear localization of vsx1. Required for progression through mitosis during organogenesis. The sequence is that of SUMO-conjugating enzyme UBC9-B (ube2ib) from Danio rerio (Zebrafish).